The primary structure comprises 363 residues: GDSL esterase/lipase At1g29670 (363 aa).

The N-terminal stretch at 1 to 24 (MESYLTKWCVVLVLLCFGFSVVKA) is a signal peptide. Serine 39 acts as the Nucleophile in catalysis. Residues aspartate 327 and histidine 330 contribute to the active site.

This sequence belongs to the 'GDSL' lipolytic enzyme family.

Its subcellular location is the secreted. The polypeptide is GDSL esterase/lipase At1g29670 (Arabidopsis thaliana (Mouse-ear cress)).